The primary structure comprises 176 residues: Disulfide bond formation protein B (176 aa).

The Cytoplasmic portion of the chain corresponds to 1 to 13 (MQFLNTFSKSRIS). Residues 14 to 30 (WLLLLLCIVFFEGSALF) form a helical membrane-spanning segment. Residues 31-48 (FQHGMKLGPCVMCIYERV) lie on the Periplasmic side of the membrane. Cys-40 and Cys-43 form a disulfide bridge. A helical transmembrane segment spans residues 49–64 (AMMGIAFAALLGAIAP). Over 65 to 71 (QYAIIRW) the chain is Cytoplasmic. A helical membrane pass occupies residues 72 to 89 (AGLIAWGYSAVRGLQLSI). Over 90-144 (EHVGYQFNPSPFATCDLFVQFPNWAPLNKWVPWMFEAYGNCAEVVWTFLGQSMPQ) the chain is Periplasmic. Cys-104 and Cys-130 form a disulfide bridge. Residues 145-163 (WLVIIFAGNLVALALIVIA) traverse the membrane as a helical segment. The Cytoplasmic portion of the chain corresponds to 164-176 (QFFSKKTNTILDM).

This sequence belongs to the DsbB family.

Its subcellular location is the cell inner membrane. Its function is as follows. Required for disulfide bond formation in some periplasmic proteins. Acts by oxidizing the DsbA protein. In Photobacterium profundum (strain SS9), this protein is Disulfide bond formation protein B.